The chain runs to 204 residues: Guanylate kinase (204 aa).

The 180-residue stretch at 5–184 (GLLIVLSGPS…AVQRIKDIIA (180 aa)) folds into the Guanylate kinase-like domain. An ATP-binding site is contributed by 12–19 (GPSGVGKG).

The protein belongs to the guanylate kinase family.

The protein localises to the cytoplasm. It catalyses the reaction GMP + ATP = GDP + ADP. Functionally, essential for recycling GMP and indirectly, cGMP. The protein is Guanylate kinase of Enterococcus faecalis (strain ATCC 700802 / V583).